A 487-amino-acid chain; its full sequence is 1,4-beta-D-glucan cellobiohydrolase CEL6A (487 aa).

The signal sequence occupies residues 1-17; the sequence is MASKLFLAAALLQGALS. A CBM1 domain is found at 27-63; sequence ACAAQWGQCGGQDYTGPTCCQSGSTCVVSNQWYSQCL. Cystine bridges form between C35–C52 and C46–C62. A compositionally biased stretch (low complexity) spans 64–117; sequence PGSSNPTTTSRTSTSSSSSTSRTSSSTSRPPSSVPTTPTSVPPTITTTPTTTPT. Positions 64–127 are disordered; it reads PGSSNPTTTS…GGSGPGTTAS (64 aa). The substrate site is built by W175 and D177. Residue D216 is part of the active site. D262 (proton donor) is an active-site residue. Substrate-binding residues include H307, W310, N346, W407, K435, and E439. D441 (proton acceptor) is an active-site residue.

The protein belongs to the glycosyl hydrolase 6 (cellulase B) family.

The protein localises to the secreted. It carries out the reaction Hydrolysis of (1-&gt;4)-beta-D-glucosidic linkages in cellulose and cellotetraose, releasing cellobiose from the non-reducing ends of the chains.. Exoglucanase that plays an important function in biomass degradation by catalyzing the hydrolysis of the non-reducing end beta-1,4-glucosidic linkages in cellulose and cellotetraose to release cellobiose. Shows higher hydrolytic activities on phosphoric acid-swollen cellulose (PSC), beta-glucan, and cellooligosaccharide derivatives than on cellulose, of which the best substrates were cellooligosaccharides. The polypeptide is 1,4-beta-D-glucan cellobiohydrolase CEL6A (Pyricularia oryzae (strain 70-15 / ATCC MYA-4617 / FGSC 8958) (Rice blast fungus)).